The sequence spans 290 residues: MSNSYLAFPKFDPVIFSIGPVSLHWYGLMYLVGFVFAMWLAVRRANKPGSGWTKEEVENLLYAGFLGVFIGGRVGYVLFYNLPMFLDNPLYLFKVWDGGMSFHGGLIGVICVMLWFARRTKRNFFQVADFIAPLIPFGLGAGRLGNFINAELWGRVTTDTPWAMLFPTSRNTDIAIVAADPAKWQAIFNQYGVLPRHPSQLYEMILEGVVLFIILNVFIRKPRPMGSVSGLFLIGYGTFRIIVECFRQPDEQLGLFEGMISMGQILSVPMILAGIIMMIWAYRRPTQKLS.

The next 7 helical transmembrane spans lie at V21 to A41, L60 to Y80, W96 to F116, F124 to L144, S199 to I219, G226 to F246, and I260 to W280. R143 is an a 1,2-diacyl-sn-glycero-3-phospho-(1'-sn-glycerol) binding site.

This sequence belongs to the Lgt family.

The protein resides in the cell inner membrane. The catalysed reaction is L-cysteinyl-[prolipoprotein] + a 1,2-diacyl-sn-glycero-3-phospho-(1'-sn-glycerol) = an S-1,2-diacyl-sn-glyceryl-L-cysteinyl-[prolipoprotein] + sn-glycerol 1-phosphate + H(+). It functions in the pathway protein modification; lipoprotein biosynthesis (diacylglyceryl transfer). Its function is as follows. Catalyzes the transfer of the diacylglyceryl group from phosphatidylglycerol to the sulfhydryl group of the N-terminal cysteine of a prolipoprotein, the first step in the formation of mature lipoproteins. The sequence is that of Phosphatidylglycerol--prolipoprotein diacylglyceryl transferase from Yersinia pseudotuberculosis serotype O:1b (strain IP 31758).